A 105-amino-acid chain; its full sequence is Small ribosomal subunit protein eS24 (105 aa).

This sequence belongs to the eukaryotic ribosomal protein eS24 family.

In Ignicoccus hospitalis (strain KIN4/I / DSM 18386 / JCM 14125), this protein is Small ribosomal subunit protein eS24.